A 416-amino-acid polypeptide reads, in one-letter code: Serine hydroxymethyltransferase (416 aa).

Residues L121 and 125–127 contribute to the (6S)-5,6,7,8-tetrahydrofolate site; that span reads GHL. Position 230 is an N6-(pyridoxal phosphate)lysine (K230).

Belongs to the SHMT family. In terms of assembly, homodimer. Pyridoxal 5'-phosphate serves as cofactor.

It is found in the cytoplasm. It carries out the reaction (6R)-5,10-methylene-5,6,7,8-tetrahydrofolate + glycine + H2O = (6S)-5,6,7,8-tetrahydrofolate + L-serine. Its pathway is one-carbon metabolism; tetrahydrofolate interconversion. It functions in the pathway amino-acid biosynthesis; glycine biosynthesis; glycine from L-serine: step 1/1. Catalyzes the reversible interconversion of serine and glycine with tetrahydrofolate (THF) serving as the one-carbon carrier. This reaction serves as the major source of one-carbon groups required for the biosynthesis of purines, thymidylate, methionine, and other important biomolecules. Also exhibits THF-independent aldolase activity toward beta-hydroxyamino acids, producing glycine and aldehydes, via a retro-aldol mechanism. This is Serine hydroxymethyltransferase from Nitrosospira multiformis (strain ATCC 25196 / NCIMB 11849 / C 71).